We begin with the raw amino-acid sequence, 819 residues long: Molybdenum cofactor sulfurase (819 aa).

Lys271 is modified (N6-(pyridoxal phosphate)lysine). The active site involves Cys430. The MOSC domain occupies 650–817 (CKLLRYSSST…IGVGEEVNPD (168 aa)).

The protein belongs to the class-V pyridoxal-phosphate-dependent aminotransferase family. MOCOS subfamily. Pyridoxal 5'-phosphate serves as cofactor. In terms of tissue distribution, ubiquitously expressed.

The enzyme catalyses Mo-molybdopterin + L-cysteine + AH2 = thio-Mo-molybdopterin + L-alanine + A + H2O. It participates in cofactor biosynthesis; molybdopterin biosynthesis. Functionally, sulfurates the molybdenum cofactor. Sulfation of molybdenum is essential for xanthine dehydrogenase (XDH) and aldehyde oxidase (ADO) enzymes in which molybdenum cofactor is liganded by 1 oxygen and 1 sulfur atom in active form. Modulates cold stress- and osmotic stress-responsive gene expression by acting as key regulator of abscisic acid (ABA) biosynthesis. The polypeptide is Molybdenum cofactor sulfurase (ABA3) (Arabidopsis thaliana (Mouse-ear cress)).